The primary structure comprises 61 residues: Potassium channel toxin alpha-KTx 15.6 (61 aa).

An N-terminal signal peptide occupies residues 1 to 23 (MKAFYGMLVIFILCSTCYISVDS). Gln24 carries the post-translational modification Pyrrolidone carboxylic acid. 3 disulfides stabilise this stretch: Cys31–Cys52, Cys37–Cys57, and Cys41–Cys59.

This sequence belongs to the short scorpion toxin superfamily. Potassium channel inhibitor family. Alpha-KTx 15 subfamily. Expressed by the venom gland.

It localises to the secreted. Irreversibly blocks the A-type voltage-gated potassium channels in rat cerebellum granular cells (190 nM induce 50% inhibitory effect) (IC(50)=190 nM). Also weakly inhibits Kv1.2/KCNA2 and Kv1.3/KCNA3. This chain is Potassium channel toxin alpha-KTx 15.6, found in Tityus discrepans (Venezuelan scorpion).